A 225-amino-acid chain; its full sequence is 2-C-methyl-D-erythritol 4-phosphate cytidylyltransferase (225 aa).

The protein belongs to the IspD/TarI cytidylyltransferase family. IspD subfamily.

The enzyme catalyses 2-C-methyl-D-erythritol 4-phosphate + CTP + H(+) = 4-CDP-2-C-methyl-D-erythritol + diphosphate. Its pathway is isoprenoid biosynthesis; isopentenyl diphosphate biosynthesis via DXP pathway; isopentenyl diphosphate from 1-deoxy-D-xylulose 5-phosphate: step 2/6. Catalyzes the formation of 4-diphosphocytidyl-2-C-methyl-D-erythritol from CTP and 2-C-methyl-D-erythritol 4-phosphate (MEP). This Cereibacter sphaeroides (strain ATCC 17023 / DSM 158 / JCM 6121 / CCUG 31486 / LMG 2827 / NBRC 12203 / NCIMB 8253 / ATH 2.4.1.) (Rhodobacter sphaeroides) protein is 2-C-methyl-D-erythritol 4-phosphate cytidylyltransferase.